The primary structure comprises 255 residues: Probable esterase ATEG_07663 (255 aa).

Active-site charge relay system residues include serine 122, aspartate 200, and histidine 227.

It belongs to the LovG family.

Its function is as follows. Probable esterase; part of the cluster B that mediates the biosynthesis of azasperpyranones, members of the azaphilone family that exhibit anti-cancer activities. Azasperpyranones are synthesized by 2 clusters, A and B. Cluster A is responsible for the production of the polyhydric phenol moiety while the azaphilonoid scaffold is produced by the cluster B. The non-reducing polyketide synthase ATEG_03629 produces 5-methyl orsellinic acid, which is then reduced to 5-methyl orsellinic aldehyde by the NRPS-like protein ATEG_03630. 5-methyl orsellinic aldehyde is then first hydroxylated by the FAD-dependent monooxygenase ATEG_03635 and subsequently hydroxylated by the cytochrome P450 monooxygenase ATEG_03631 to produce the unstable polyhydric phenol precursor of azasperpyranones. On the other hand, the polyketide synthase ATEG_07659 is responsible for producing the 3,5-dimethyloctadienone moiety from acetyl-CoA, three malonyl-CoA, and two S-adenosyl methionines (SAM). The 3,5-dimethyloctadienone moiety is then loaded onto the SAT domain of ATEG_07661 and extended with four malonyl-CoA and one SAM, which leads to the formation of 2,4-dihydroxy-6-(5,7-dimethyl-2-oxo-trans-3-trans-5-nonadienyl)-3-methylbenzaldehyde (compound 8) after reductive release and aldol condensation. The FAD-dependent monooxygenase ATEG_07662 is the next enzyme in the biosynthesis sequence and hydroxylates the side chain at the benzylic position of compound 8. In Aspergillus nidulans, afoF, the ortholog of the FAD-dependent oxygenase ATEG_07660, is the key enzyme for the biosynthesis of asperfuranone by catalyzing the hydroxylation at C-8 of to prevent the formation of a six-membered ring hemiacetal intermediate and thus facilitating the formation of a five-membered ring to produce asperfuranone. In Aspergillus terreus, ATEG_07660 is probably not functional, which leads to the formation of the six-membered ring hemiacetal intermediate presperpyranone instead of asperfuranone. Finally, ATEG_03636 is involved in the condensation of the polyhydric phenol moiety produced by cluster A and the perasperpyranone precursor produced by cluster B, to yield azasperpyranone A. Further modifications of azasperpyranone A result in the production of derivatives, including azasperpyranone B to F. This Aspergillus terreus (strain NIH 2624 / FGSC A1156) protein is Probable esterase ATEG_07663.